A 775-amino-acid polypeptide reads, in one-letter code: 5-methyltetrahydropteroyltriglutamate--homocysteine methyltransferase (775 aa).

Residues 16–19 (REMK) and Lys115 contribute to the 5-methyltetrahydropteroyltri-L-glutamate site. L-homocysteine-binding positions include 435–437 (IGS) and Glu488. Residues 435-437 (IGS) and Glu488 each bind L-methionine. Residues 519–520 (RC) and Trp565 each bind 5-methyltetrahydropteroyltri-L-glutamate. Position 603 (Asp603) interacts with L-homocysteine. Asp603 lines the L-methionine pocket. Glu609 contacts 5-methyltetrahydropteroyltri-L-glutamate. 3 residues coordinate Zn(2+): His645, Cys647, and Glu669. The active-site Proton donor is the His698. Cys730 is a binding site for Zn(2+).

The protein belongs to the vitamin-B12 independent methionine synthase family. It depends on Zn(2+) as a cofactor.

The enzyme catalyses 5-methyltetrahydropteroyltri-L-glutamate + L-homocysteine = tetrahydropteroyltri-L-glutamate + L-methionine. It functions in the pathway amino-acid biosynthesis; L-methionine biosynthesis via de novo pathway; L-methionine from L-homocysteine (MetE route): step 1/1. Catalyzes the transfer of a methyl group from 5-methyltetrahydrofolate to homocysteine resulting in methionine formation. The polypeptide is 5-methyltetrahydropteroyltriglutamate--homocysteine methyltransferase (Coxiella burnetii (strain CbuK_Q154) (Coxiella burnetii (strain Q154))).